An 84-amino-acid polypeptide reads, in one-letter code: UPF0386 protein NGR_c10980 (84 aa).

Belongs to the UPF0386 family.

The protein is UPF0386 protein NGR_c10980 of Sinorhizobium fredii (strain NBRC 101917 / NGR234).